Here is a 218-residue protein sequence, read N- to C-terminus: Pyridoxine/pyridoxamine 5'-phosphate oxidase (218 aa).

Substrate contacts are provided by residues 12–15 (RLAY) and R70. FMN-binding positions include 65-70 (RTVLLR), 80-81 (YT), K87, and Q109. Substrate-binding residues include Y127, R131, and S135. Residues 145–146 (QS) and W191 each bind FMN. 197–199 (RLH) serves as a coordination point for substrate. R201 is a binding site for FMN.

This sequence belongs to the pyridoxamine 5'-phosphate oxidase family. In terms of assembly, homodimer. The cofactor is FMN.

It catalyses the reaction pyridoxamine 5'-phosphate + O2 + H2O = pyridoxal 5'-phosphate + H2O2 + NH4(+). The catalysed reaction is pyridoxine 5'-phosphate + O2 = pyridoxal 5'-phosphate + H2O2. The protein operates within cofactor metabolism; pyridoxal 5'-phosphate salvage; pyridoxal 5'-phosphate from pyridoxamine 5'-phosphate: step 1/1. It participates in cofactor metabolism; pyridoxal 5'-phosphate salvage; pyridoxal 5'-phosphate from pyridoxine 5'-phosphate: step 1/1. In terms of biological role, catalyzes the oxidation of either pyridoxine 5'-phosphate (PNP) or pyridoxamine 5'-phosphate (PMP) into pyridoxal 5'-phosphate (PLP). This Deinococcus geothermalis (strain DSM 11300 / CIP 105573 / AG-3a) protein is Pyridoxine/pyridoxamine 5'-phosphate oxidase.